Reading from the N-terminus, the 380-residue chain is Guanine nucleotide-binding protein subunit beta (380 aa).

WD repeat units follow at residues 64–94 (GHSG…IVWN), 106–136 (LHCP…SIFN), 155–186 (GHKG…VLWD), 203–234 (GHTA…RLWD), 247–277 (GHEG…RLFD), 296–326 (NELP…YVWD), and 342–372 (SHEG…KIWA).

It belongs to the WD repeat G protein beta family. G proteins are composed of 3 units, alpha, beta and gamma. Interacts with the gamma subunits RGG1 and RGG2.

The protein localises to the cell membrane. Guanine nucleotide-binding proteins (G proteins) are involved as modulators or transducers in various transmembrane signaling systems. The beta and gamma chains are required for the GTPase activity, for replacement of GDP by GTP, and for G protein-effector interaction. This is Guanine nucleotide-binding protein subunit beta from Oryza sativa subsp. japonica (Rice).